Reading from the N-terminus, the 394-residue chain is Elongation factor Tu (394 aa).

Positions 10–204 (KPHVNIGTIG…AVDSYIPQPV (195 aa)) constitute a tr-type G domain. Positions 19-26 (GHVDHGKT) are G1. GTP is bound at residue 19–26 (GHVDHGKT). Threonine 26 contacts Mg(2+). Positions 60–64 (GITIS) are G2. Positions 81–84 (DCPG) are G3. GTP contacts are provided by residues 81–85 (DCPGH) and 136–139 (NKVD). The tract at residues 136–139 (NKVD) is G4. The tract at residues 174–176 (SAL) is G5.

Belongs to the TRAFAC class translation factor GTPase superfamily. Classic translation factor GTPase family. EF-Tu/EF-1A subfamily. As to quaternary structure, monomer.

The protein resides in the cytoplasm. It catalyses the reaction GTP + H2O = GDP + phosphate + H(+). Its function is as follows. GTP hydrolase that promotes the GTP-dependent binding of aminoacyl-tRNA to the A-site of ribosomes during protein biosynthesis. The protein is Elongation factor Tu of Rickettsia montanensis.